We begin with the raw amino-acid sequence, 141 residues long: Large ribosomal subunit protein uL11 (141 aa).

This sequence belongs to the universal ribosomal protein uL11 family. In terms of assembly, part of the ribosomal stalk of the 50S ribosomal subunit. Interacts with L10 and the large rRNA to form the base of the stalk. L10 forms an elongated spine to which L12 dimers bind in a sequential fashion forming a multimeric L10(L12)X complex. One or more lysine residues are methylated.

In terms of biological role, forms part of the ribosomal stalk which helps the ribosome interact with GTP-bound translation factors. The chain is Large ribosomal subunit protein uL11 from Synechococcus sp. (strain WH7803).